The sequence spans 532 residues: Probable rhamnogalacturonase B (532 aa).

Positions 1 to 21 (MRINTLSLFSLVSLVPTLALA) are cleaved as a signal peptide. The cysteines at positions 42 and 68 are disulfide-linked. D219 (proton donor) is an active-site residue. Cysteines 221 and 238 form a disulfide. N239 carries an N-linked (GlcNAc...) asparagine glycan. Residue H294 is part of the active site. N-linked (GlcNAc...) asparagine glycosylation occurs at N321. Cystine bridges form between C344–C350 and C374–C383. 2 stretches are compositionally biased toward low complexity: residues 466–475 (TVAAATSTPA) and 490–499 (QPSQQSPGQS). The disordered stretch occupies residues 466-532 (TVAAATSTPA…HRHHQRHGHH (67 aa)). Residues 521–532 (AGHRHHQRHGHH) show a composition bias toward basic residues.

Belongs to the glycosyl hydrolase 28 family.

It is found in the secreted. It carries out the reaction Endohydrolysis of alpha-D-GalA-(1-&gt;2)-alpha-L-Rha glycosidic bond in the rhamnogalacturonan I backbone with initial inversion of anomeric configuration releasing oligosaccharides with beta-D-GalA at the reducing end.. In terms of biological role, pectinolytic enzymes consist of four classes of enzymes: pectine lyase, polygalacturonase, pectin methylesterase and rhamnogalacturonase. Hydrolyzes alpha-D-galacturonopyranosyl-(1,2)-alpha-L-rhamnopyranosyl linkages in the backbone of the hairy regions of pectins. The sequence is that of Probable rhamnogalacturonase B (rhgB) from Aspergillus oryzae (strain ATCC 42149 / RIB 40) (Yellow koji mold).